Reading from the N-terminus, the 130-residue chain is Small ribosomal subunit protein uS9 (130 aa).

Belongs to the universal ribosomal protein uS9 family.

This Burkholderia ambifaria (strain MC40-6) protein is Small ribosomal subunit protein uS9.